Reading from the N-terminus, the 618-residue chain is DnaJ homolog subfamily C member 2 (618 aa).

A J domain is found at 85-158; the sequence is DHYAVLGLAH…VKRRAFDSVD (74 aa). 3 disordered regions span residues 281–315, 330–349, and 419–448; these read KEEE…QQEE, QAAQ…IKKE, and LQKE…QNNR. Positions 428–448 are enriched in polar residues; it reads QAQQAARGSEHSSAAGGQNNR. 2 consecutive SANT domains span residues 445-507 and 548-603; these read QNNR…KLDP and SNAA…EMIK.

As to quaternary structure, component of ribosome-associated complex (RAC).

It localises to the nucleus. The protein localises to the cytoplasm. Its subcellular location is the cytosol. Functionally, acts both as a chaperone in the cytosol and as a chromatin regulator in the nucleus. When cytosolic, acts as a molecular chaperone: component of the ribosome-associated complex (RAC), a complex involved in folding or maintaining nascent polypeptides in a folding-competent state. When nuclear, mediates the switching from polycomb-repressed genes to an active state: specifically recruited at histone H2A ubiquitinated at 'Lys-119' (H2AK119ub), and promotes the displacement of the polycomb PRC1 complex from chromatin, thereby facilitating transcription activation. In Danio rerio (Zebrafish), this protein is DnaJ homolog subfamily C member 2 (dnajc2).